We begin with the raw amino-acid sequence, 252 residues long: Chitooligosaccharide deacetylase (252 aa).

Histidine 125 lines the Mg(2+) pocket.

It belongs to the YdjC deacetylase family. ChbG subfamily. As to quaternary structure, homodimer. The cofactor is Mg(2+).

It is found in the cytoplasm. The catalysed reaction is N,N'-diacetylchitobiose + H2O = N-acetyl-beta-D-glucosaminyl-(1-&gt;4)-D-glucosamine + acetate. The enzyme catalyses diacetylchitobiose-6'-phosphate + H2O = N'-monoacetylchitobiose-6'-phosphate + acetate. It participates in glycan degradation; chitin degradation. In terms of biological role, involved in the degradation of chitin. ChbG is essential for growth on the acetylated chitooligosaccharides chitobiose and chitotriose but is dispensable for growth on cellobiose and chitosan dimer, the deacetylated form of chitobiose. Deacetylation of chitobiose-6-P and chitotriose-6-P is necessary for both the activation of the chb promoter by the regulatory protein ChbR and the hydrolysis of phosphorylated beta-glucosides by the phospho-beta-glucosidase ChbF. Catalyzes the removal of only one acetyl group from chitobiose-6-P to yield monoacetylchitobiose-6-P, the inducer of ChbR and the substrate of ChbF. This Escherichia coli O157:H7 protein is Chitooligosaccharide deacetylase.